The following is a 369-amino-acid chain: Aspartate beta-hydroxylase domain-containing protein 2 (369 aa).

Over 1–58 (MVWAPLGPPRTDCLTLLHTPSKDSPKMSLEWLVAWSWSLDGLRDCIATGIQSVRDCDT) the chain is Cytoplasmic. Residues 59-79 (TAVITVACLLVLFVWYCYHVG) form a helical membrane-spanning segment. At 80-369 (REQPRPYVSV…ALDFIFAPGR (290 aa)) the chain is on the lumenal side. N211 carries N-linked (GlcNAc...) asparagine glycosylation. 2-oxoglutarate-binding residues include W228 and S272. H283 contributes to the Fe cation binding site. 292–294 (RCH) provides a ligand contact to 2-oxoglutarate. H328 lines the Fe cation pocket. R341 provides a ligand contact to 2-oxoglutarate.

Belongs to the aspartyl/asparaginyl beta-hydroxylase family. Requires Fe cation as cofactor.

It localises to the membrane. May function as 2-oxoglutarate-dependent dioxygenase. In Homo sapiens (Human), this protein is Aspartate beta-hydroxylase domain-containing protein 2 (ASPHD2).